Here is a 75-residue protein sequence, read N- to C-terminus: Small ribosomal subunit protein bS18c (75 aa).

The protein belongs to the bacterial ribosomal protein bS18 family. Part of the 30S ribosomal subunit.

It localises to the plastid. Its subcellular location is the chloroplast. This chain is Small ribosomal subunit protein bS18c, found in Psilotum nudum (Whisk fern).